We begin with the raw amino-acid sequence, 357 residues long: MEWLNVLESHGQALLGPVAWMVVWSLVKIVVIAVPIILCVAYLTYWERKMIGAMHVRLGPTRVGFKGLLQPFADVFKLLTKEVVVPSAANKVLFVVAPVVTLMPALAAWAVVPFGPEVVLANVNAGLLYIMAITSIGVYGVIVAGWASNSKYAFLGALRASAQMVSYELAIGFVLVSVLLVSGSLNMSEIVLGQGRGWFAERGLTFLSWNWLPLLPLFIIYVISAVAETNRHPFDVVEGESEIVAGHMVEYSGMAFALFFLGEYANMILLSCMAAIMFLGGWMSPIDIAPLNWIPGWIWLGIKTFCVVSMFVWFRASFPRYRYDQIMRLGWKIFIPLTGVWLVVLAIWMQTPWNIWR.

8 helical membrane-spanning segments follow: residues 18–38 (VAWM…PIIL), 92–112 (VLFV…WAVV), 127–147 (LLYI…AGWA), 165–185 (VSYE…SGSL), 206–226 (FLSW…ISAV), 268–288 (ILLS…PIDI), 294–314 (IPGW…FVWF), and 329–349 (LGWK…AIWM).

Belongs to the complex I subunit 1 family. NDH-1 is composed of 14 different subunits. Subunits NuoA, H, J, K, L, M, N constitute the membrane sector of the complex.

It is found in the cell inner membrane. It catalyses the reaction a quinone + NADH + 5 H(+)(in) = a quinol + NAD(+) + 4 H(+)(out). Its function is as follows. NDH-1 shuttles electrons from NADH, via FMN and iron-sulfur (Fe-S) centers, to quinones in the respiratory chain. The immediate electron acceptor for the enzyme in this species is believed to be ubiquinone. Couples the redox reaction to proton translocation (for every two electrons transferred, four hydrogen ions are translocated across the cytoplasmic membrane), and thus conserves the redox energy in a proton gradient. This subunit may bind ubiquinone. This is NADH-quinone oxidoreductase subunit H from Bordetella bronchiseptica (strain ATCC BAA-588 / NCTC 13252 / RB50) (Alcaligenes bronchisepticus).